The sequence spans 117 residues: Large ribosomal subunit protein bL20c (117 aa).

This sequence belongs to the bacterial ribosomal protein bL20 family.

The protein resides in the plastid. It localises to the chloroplast. In terms of biological role, binds directly to 23S ribosomal RNA and is necessary for the in vitro assembly process of the 50S ribosomal subunit. It is not involved in the protein synthesizing functions of that subunit. This Citrus sinensis (Sweet orange) protein is Large ribosomal subunit protein bL20c.